Here is a 153-residue protein sequence, read N- to C-terminus: Endoribonuclease YbeY (153 aa).

Zn(2+)-binding residues include H116, H120, and H126.

It belongs to the endoribonuclease YbeY family. Requires Zn(2+) as cofactor.

It is found in the cytoplasm. Functionally, single strand-specific metallo-endoribonuclease involved in late-stage 70S ribosome quality control and in maturation of the 3' terminus of the 16S rRNA. This Leifsonia xyli subsp. xyli (strain CTCB07) protein is Endoribonuclease YbeY.